The primary structure comprises 1719 residues: Serine/threonine-protein kinase MRCK alpha (1719 aa).

Residues phenylalanine 77–phenylalanine 343 form the Protein kinase domain. Residues isoleucine 83–valine 91 and lysine 106 contribute to the ATP site. The Proton acceptor role is filled by aspartate 201. 2 positions are modified to phosphoserine; by autocatalysis: serine 222 and serine 234. At threonine 240 the chain carries Phosphothreonine; by autocatalysis. The AGC-kinase C-terminal domain maps to serine 344–serine 414. Coiled coils occupy residues asparagine 437–glutamine 670, serine 713–glutamine 820, and leucine 880–glycine 943. Residues threonine 999–cysteine 1049 form a Phorbol-ester/DAG-type zinc finger. The region spanning glycine 1069–lysine 1188 is the PH domain. The CNH domain maps to isoleucine 1214–asparagine 1486. Position 1532 is a phosphoserine (serine 1532). The 14-residue stretch at isoleucine 1558–glycine 1571 folds into the CRIB domain. Positions leucine 1579–proline 1719 are disordered. Residues serine 1591–lysine 1606 show a composition bias toward polar residues. 9 positions are modified to phosphoserine: serine 1598, serine 1600, serine 1616, serine 1638, serine 1651, serine 1656, serine 1680, serine 1706, and serine 1708. A compositionally biased stretch (low complexity) spans glycine 1612–alanine 1627. Low complexity predominate over residues proline 1652–glycine 1661.

Belongs to the protein kinase superfamily. AGC Ser/Thr protein kinase family. DMPK subfamily. Homodimer and homotetramer via the coiled coil regions. Interacts tightly with GTP-bound but not GDP-bound CDC42. Forms a tripartite complex with MYO18A and LRP35A with the latter acting as an adapter connecting CDC42BPA and MYO18A. LRP35A binding results in activation of CDC42BPA by abolition of its negative autoregulation. Interacts with LURAP1. Interacts (via AGC-kinase C-terminal domain) with FAM89B/LRAP25 (via LRR repeat). Forms a tripartite complex with FAM89B/LRAP25 and LIMK1. It depends on Mg(2+) as a cofactor. Proteolytically cleaved by caspases upon apoptosis induction. The cleavage at Asp-478 by CASP3 increases its kinase activity (in vitro).

The protein localises to the cytoplasm. It localises to the cell projection. Its subcellular location is the lamellipodium. The catalysed reaction is L-seryl-[protein] + ATP = O-phospho-L-seryl-[protein] + ADP + H(+). It catalyses the reaction L-threonyl-[protein] + ATP = O-phospho-L-threonyl-[protein] + ADP + H(+). Maintained in an inactive, closed conformation by an interaction between the kinase domain and the negative autoregulatory C-terminal coiled-coil region. Agonist binding to the phorbol ester binding site disrupts this, releasing the kinase domain to allow N-terminus-mediated dimerization and kinase activation by transautophosphorylation. Inhibited by chelerythrine chloride. Functionally, serine/threonine-protein kinase which is an important downstream effector of CDC42 and plays a role in the regulation of cytoskeleton reorganization and cell migration. Regulates actin cytoskeletal reorganization via phosphorylation of PPP1R12C and MYL9/MLC2. In concert with MYO18A and LRP35A, is involved in modulating lamellar actomyosin retrograde flow that is crucial to cell protrusion and migration. Phosphorylates: PPP1R12A and LIMK2. May play a role in TFRC-mediated iron uptake. In concert with FAM89B/LRAP25 mediates the targeting of LIMK1 to the lamellipodium resulting in its activation and subsequent phosphorylation of CFL1 which is important for lamellipodial F-actin regulation. Triggers the formation of an extrusion apical actin ring required for epithelial extrusion of apoptotic cells. In Mus musculus (Mouse), this protein is Serine/threonine-protein kinase MRCK alpha (Cdc42bpa).